Reading from the N-terminus, the 804-residue chain is Protein-lysine N-methyltransferase SMYD4 (804 aa).

An S-adenosyl-L-methionine-binding site is contributed by 112-114; it reads RSA. Residues 233–574 form the SET domain; it reads SSIGLCVDPL…KGQEILHCYG (342 aa). 8 residues coordinate Zn(2+): C296, C299, C309, C312, C318, C322, H331, and C335. Residues 296 to 335 form an MYND-type zinc finger; that stretch reads CHRCLKHTLATVPCDGCSYAKYCSQECLQQAWELYHRTEC. S-adenosyl-L-methionine contacts are provided by residues N427, 539 to 540, Y573, and F595; that span reads NH.

Belongs to the class V-like SAM-binding methyltransferase superfamily. As to quaternary structure, interacts (via MYND-type zinc finger) with HDAC1.

The protein resides in the nucleus. It is found in the cytoplasm. The enzyme catalyses L-lysyl-[protein] + S-adenosyl-L-methionine = N(6)-methyl-L-lysyl-[protein] + S-adenosyl-L-homocysteine + H(+). Protein-lysine N-methyltransferase. Monomethylates PRMT5, modulating its transcriptional activity. May also act as a histone methyltransferase. Plays a critical role in cardiac development. Acts as a key epigenetic regulator of gene expression during cardiac development via its dual activities as a methyltransferase and negative regulator of HDAC1. This Homo sapiens (Human) protein is Protein-lysine N-methyltransferase SMYD4.